The sequence spans 505 residues: Serine carboxypeptidase-like 47 (505 aa).

Residues 1–22 (MEAKTFFLFMLFIFSQSWLSTS) form the signal peptide. N-linked (GlcNAc...) asparagine glycans are attached at residues asparagine 37, asparagine 86, and asparagine 122. Disulfide bonds link cysteine 138/cysteine 378, cysteine 306/cysteine 321, and cysteine 344/cysteine 349. Serine 228 is an active-site residue. A glycan (N-linked (GlcNAc...) asparagine) is linked at asparagine 301. Aspartate 416 is an active-site residue. Residues asparagine 432 and asparagine 444 are each glycosylated (N-linked (GlcNAc...) asparagine). The active site involves histidine 473.

The protein belongs to the peptidase S10 family. Expressed in roots, flowers and siliques.

It is found in the secreted. In terms of biological role, probable carboxypeptidase. The chain is Serine carboxypeptidase-like 47 (SCPL47) from Arabidopsis thaliana (Mouse-ear cress).